The primary structure comprises 290 residues: Elongation factor Ts (290 aa).

Residues 83 to 86 are involved in Mg(2+) ion dislocation from EF-Tu; sequence TDFV.

The protein belongs to the EF-Ts family.

It is found in the cytoplasm. In terms of biological role, associates with the EF-Tu.GDP complex and induces the exchange of GDP to GTP. It remains bound to the aminoacyl-tRNA.EF-Tu.GTP complex up to the GTP hydrolysis stage on the ribosome. The chain is Elongation factor Ts (tsf) from Aquifex aeolicus (strain VF5).